Here is a 385-residue protein sequence, read N- to C-terminus: GDP-mannose-dependent alpha-(1-6)-phosphatidylinositol monomannoside mannosyltransferase (385 aa).

Residues R205, K210, V262, and E299 each coordinate GDP-alpha-D-mannose.

This sequence belongs to the glycosyltransferase group 1 family. Glycosyltransferase 4 subfamily.

It catalyses the reaction a 1,2-diacyl-sn-glycero-3-phospho-[alpha-D-mannopyranosyl-(1&lt;-&gt;6)-D-myo-inositol] + GDP-alpha-D-mannose = a 2,6-O-bis(alpha-D-mannopyranosyl)-1-phosphatidyl-1D-myo-inositol + GDP + H(+). It carries out the reaction a 1,2-diacyl-sn-glycero-3-phospho-[alpha-D-6-acyl-mannopyranosyl-(1&lt;-&gt;6)-D-myo-inositol] + GDP-alpha-D-mannose = a 2-O-(alpha-D-mannosyl)-6-O-(6-O-acyl-alpha-D-mannosyl)-1-phosphatidyl-1D-myo-inositol + GDP + H(+). The protein operates within phospholipid metabolism; phosphatidylinositol metabolism. Involved in the biosynthesis of phosphatidyl-myo-inositol mannosides (PIM) which are early precursors in the biosynthesis of lipomannans (LM) and lipoarabinomannans (LAM). Catalyzes the addition of a mannosyl residue from GDP-D-mannose (GDP-Man) to the position 6 of a phosphatidyl-myo-inositol bearing an alpha-1,2-linked mannose residue (PIM1) to generate phosphatidyl-myo-inositol bearing alpha-1,2- and alpha-1,6-linked mannose residues (Ac1PIM2). PimB also catalyzes the addition of a mannosyl residue from GDP-Man to the position 6 of phosphatidyl-myo-inositol bearing an acylated alpha-1,2-linked mannose residue (Ac1PIM1) to generate monoacylated phosphatidyl-myo-inositol bearing alpha-1,2- and alpha-1,6-linked mannose residues (Ac1PIM2). The addition of the second mannosyl residue by PimB preferentially occurs before the acylation of the mannosyl residue transferred by PimA. Also able to transfer a mannosyl residue from GDP-Man to the position 6 of a phosphatidyl-myo-inositol (PI), but this reaction is very slow. The protein is GDP-mannose-dependent alpha-(1-6)-phosphatidylinositol monomannoside mannosyltransferase of Mycobacterium tuberculosis (strain CDC 1551 / Oshkosh).